Here is an 882-residue protein sequence, read N- to C-terminus: Alanine--tRNA ligase (882 aa).

4 residues coordinate Zn(2+): His-570, His-574, Cys-672, and His-676.

Belongs to the class-II aminoacyl-tRNA synthetase family. Requires Zn(2+) as cofactor.

It localises to the cytoplasm. The enzyme catalyses tRNA(Ala) + L-alanine + ATP = L-alanyl-tRNA(Ala) + AMP + diphosphate. In terms of biological role, catalyzes the attachment of alanine to tRNA(Ala) in a two-step reaction: alanine is first activated by ATP to form Ala-AMP and then transferred to the acceptor end of tRNA(Ala). Also edits incorrectly charged Ser-tRNA(Ala) and Gly-tRNA(Ala) via its editing domain. In Xanthomonas axonopodis pv. citri (strain 306), this protein is Alanine--tRNA ligase.